A 711-amino-acid chain; its full sequence is Hydroperoxide isomerase ALOXE3 (711 aa).

One can recognise a PLAT domain in the interval alanine 2–arginine 119. The Lipoxygenase domain maps to threonine 120–isoleucine 711. Fe cation contacts are provided by histidine 408, histidine 413, histidine 588, asparagine 592, and isoleucine 711.

The protein belongs to the lipoxygenase family. The cofactor is Fe cation. In terms of tissue distribution, skin specific.

It localises to the cytoplasm. It catalyses the reaction a hydroperoxyeicosatetraenoate = a hydroxy-epoxy-eicosatetraenoate. The enzyme catalyses (8S)-hydroperoxy-(5Z,9E,11Z,14Z)-eicosatetraenoate = (10R)-hydroxy-(8S,9S)-epoxy-(5Z,11Z,14Z)-eicosatrienoate. The catalysed reaction is (12R)-hydroperoxy-(5Z,8Z,10E,14Z)-eicosatetraenoate = (8R)-hydroxy-(11R,12R)-epoxy-(5Z,9E,14Z)-eicosatrienoate. It carries out the reaction (12S)-hydroperoxy-(5Z,8Z,10E,14Z)-eicosatetraenoate = (8R)-hydroxy-(11S,12S)-epoxy-(5Z,9E,14Z)-eicosatrienoate. It catalyses the reaction (12S)-hydroperoxy-(5Z,8Z,10E,14Z)-eicosatetraenoate = (10R)-hydroxy-(11S,12S)-epoxy-(5Z,8Z,14Z)-eicosatrienoate. The enzyme catalyses (15S)-hydroperoxy-(5Z,8Z,11Z,13E)-eicosatetraenoate = (13R)-hydroxy-(14S,15S)-epoxy-(5Z,8Z,11Z)-eicosatrienoate. The catalysed reaction is (13S)-hydroperoxy-(9Z,11E)-octadecadienoate = 11-hydroxy-(12S,13S)-epoxy-(9Z)-octadecenoate. It carries out the reaction (5S)-hydroperoxy-(6E,8Z,11Z,14Z)-eicosatetraenoate = 7R-hydroxy-5S,6S-epoxy-(8Z,11Z,14Z)-eicosatrienoate. It catalyses the reaction N-[omega-(9R)-hydroperoxy-(10E,12Z)-octadecadienoyloxy]acyl-beta-D-glucosyl-(1&lt;-&gt;1)-octadecasphing-4E-enine = a N-[omega-(9R,10R)-epoxy-(13R)-hydroxy-(11E)-octadecenoyloxy]acyl-beta-D-glucosyl-(1&lt;-&gt;1)-sphing-4E-enine. The enzyme catalyses a N-[omega-(9R)-hydroperoxy-(10E,12Z)-octadecadienoyloxy]-acylsphin-4E-enine = a N-[omega-(9R,10R)-epoxy-(13R)-hydroxy-(11E)-octadecenoyloxy]-acylsphing-4E-enine. The catalysed reaction is a hydroperoxyeicosatetraenoate = an oxoeicosatetraenoate + H2O. It carries out the reaction (8R)-hydroperoxy-(5Z,9E,11Z,14Z)-eicosatetraenoate = 8-oxo-(5Z,9E,11Z,14Z)-eicosatetraenoate + H2O. It catalyses the reaction (8S)-hydroperoxy-(5Z,9E,11Z,14Z)-eicosatetraenoate = 8-oxo-(5Z,9E,11Z,14Z)-eicosatetraenoate + H2O. The enzyme catalyses (12R)-hydroperoxy-(5Z,8Z,10E,14Z)-eicosatetraenoate = 12-oxo-(5Z,8Z,10E,14Z)-eicosatetraenoate + H2O. The catalysed reaction is (12S)-hydroperoxy-(5Z,8Z,10E,14Z)-eicosatetraenoate = 12-oxo-(5Z,8Z,10E,14Z)-eicosatetraenoate + H2O. It carries out the reaction (15S)-hydroperoxy-(5Z,8Z,11Z,13E)-eicosatetraenoate = 15-oxo-(5Z,8Z,11Z,13E)-eicosatetraenoate + H2O. It catalyses the reaction (13S)-hydroperoxy-(9Z,11E)-octadecadienoate = 13-oxo-(9Z,11E)-octadecadienoate + H2O. Its pathway is lipid metabolism; hydroperoxy eicosatetraenoic acid biosynthesis. The protein operates within lipid metabolism; sphingolipid metabolism. Its function is as follows. Non-heme iron-containing lipoxygenase which is atypical in that it displays a prominent hydroperoxide isomerase activity and a reduced lipoxygenases activity. The hydroperoxide isomerase activity catalyzes the isomerization of hydroperoxides, derived from arachidonic and linoleic acid by ALOX12B, into hepoxilin-type epoxyalcohols and ketones. In presence of oxygen, oxygenates polyunsaturated fatty acids, including arachidonic acid, to produce fatty acid hydroperoxides. In the skin, acts downstream of ALOX12B on the linoleate moiety of esterified omega-hydroxyacyl-sphingosine (EOS) ceramides to produce an epoxy-ketone derivative, a crucial step in the conjugation of omega-hydroxyceramide to membrane proteins. Therefore plays a crucial role in the synthesis of corneocytes lipid envelope and the establishment of the skin barrier to water loss. In parallel, it may have a signaling function in barrier formation through the production of hepoxilins metabolites. Also plays a role in adipocyte differentiation through hepoxilin A3 and hepoxilin B3 production which in turn activate PPARG. Through the production of hepoxilins in the spinal cord, it may regulate inflammatory tactile allodynia. In Mus musculus (Mouse), this protein is Hydroperoxide isomerase ALOXE3.